A 332-amino-acid polypeptide reads, in one-letter code: F-box/SPRY domain-containing protein 1 (332 aa).

The span at 1 to 10 (MTENNEETIV) shows a compositional bias: acidic residues. Positions 1 to 81 (MTENNEETIV…RRSPRRPEVS (81 aa)) are disordered. Positions 15–24 (CNLTSSTPMK) are enriched in polar residues. An F-box domain is found at 79 to 127 (EVSASRLPLKVLNQIFQYLSLKDLRSAMLTCHSWNNALSMEDSDIWQQL). In terms of domain architecture, B30.2/SPRY spans 138 to 330 (SDPFLFVELR…VTMVYVGSPQ (193 aa)).

The protein belongs to the FBXO45/Fsn family. Component of an SCF (SKP1-CUL1-F-box protein) E3 ubiquitin ligase complex composed of cul-1, fsn-1, rpm-1 and skr-1. Interacts (via SPRY domain) with scd-2 (via cytoplasmic domain). Interacts (via SPRY domain) with convertase egl-3 (via C-terminus).

It localises to the synapse. It functions in the pathway protein modification; protein ubiquitination. In terms of biological role, component of a SCF (SKP1-CUL1-F-box protein) E3 ubiquitin ligase complex which is required for the restriction and/or maturation of synapses in GABAergic neuromuscular junction (NMJ) presynaptic neurons. Promotes NRJ synapse development and synaptic transmission by negatively regulating the daf-2/InsR pathway in muscles. By targeting convertase egl-3 for degradation, negatively modulates insulin-like protein ins-4 and ins-6 processing. May stabilize synapse formation by promoting the down-regulation of scd-2. Regulates axon termination in PLM and ALM neurons. The protein is F-box/SPRY domain-containing protein 1 (fsn-1) of Caenorhabditis briggsae.